Here is a 1400-residue protein sequence, read N- to C-terminus: MNQEIMNLFNPTTPAQVFDQIRISIASPEKILSWSYGEIKKPETINYRTFKPERDGLFCARIFGPIKDYECLCGKYKRMKYKGIICEKCSVEVTLSRVRRERMGHIELAAPVAHIWFLKSLPSRIGQLLDMTLKDLERILYFEYYVVLEPGLTDLKERQLLSEEEYLRAQDQYGQDSFTAMIGAEAIRELLKGLELEKIDAQLRVEMAETDSDIKHKKLAKRLKIVEAFRYSGNKPEWMILTVVPVIPPDLRPLVPLDGGRFATSDLNDLYRRVINRNNRLKRLMELRAPDIIIRNEKRMLQEAVDALFDNGRRGRVITGANKRPLKSLADMLKGKQGRFRQNLLGKRVDYSGRSVIVVGPELKLHQCGLPKKMALELFKPFIYSRLDAKGLSTTVKQAKKLVEKERPEVWDILDEVIREHPVLLNRAPTLHRLGIQAFEPVLIEGKAIQLHPLVCAAFNADFDGDQMAVHVPLSLEAQLEARVLMMSTNNILHPANGQPIIVPSQDIVLGLYYLSILREGLPGEGKVFGDLAELEHALHAKVIHLHTKIKYRWDSLDDEGKPYKRLIETTAGRILLGQVLPKSVKLPYETINKLMTKREISSVIDQVYRHCGQKETVIFCDRIMALGFFNAFKAGISFGKDDMVVPASKWKIVDTTRTLAKDFEQQYNDGLITHGEKYNKVVDAWSKATEEIAKEMMKEISAVRKNASGAESQVNSIYMMAHSGARGSPAQMRQLAGMRGLMAKPSGEIIETPIISNFKEGLSVLEYFNSTHGARKGLADTALKTANSGYLTRRLVDVAQDCIITQDDCGTSLGIKMRAIIDAGTVVASLGSRILGRTAGEDVRDPQTNEVIVKKGELMEERDIEAIHQAGVQEVKIRSALTCELVNGICGKCYGRDLARGTPVNHGEAVGVIAAQSIGEPGTQLTMRTFHIGGAAQINEQSVIESNFEGKVVIKNKAIARNGENHNVAMVRNMVVAIVDPDGTERATHRIQYGARMHVDEGDTIKRGHRIAEWDPYSRPVLTEVEGTIDFEDLIEDQSISETLDESTGIAKRIVIDWRSTRGGADLRPAIVIKGKDGKVLKLARGGDARYMLSVDAILSVDVGAKVKPGDILARISTESAKTRDITGGLPRVAELFEARKPKDAAIIAEIAGTIRFGRDYKNKRRISIEPMDKEEEAREYLIPKGKHIHLQDGDIVEKGDFIVEGNPAPHDILAIKGIEELAAYLVNEIQEVYRLQGVLINDKHIEVIVRQMLQKVEITDQGETDMISGEQIDKIEFDQLNVKARDEGKKIATGTPVLLGITKASLQTRSFFSAASFQETTRVLTEAAVNGKVDPLEGLKENVIVGRLIPAGTGASMAKIREVAMKRDRMILDEREKQATIVPPAAPEAEPLALPPAE.

4 residues coordinate Zn(2+): Cys-71, Cys-73, Cys-86, and Cys-89. Mg(2+) is bound by residues Asp-462, Asp-464, and Asp-466. Zn(2+) is bound by residues Cys-810, Cys-884, Cys-891, and Cys-894. The tract at residues 1378-1400 is disordered; that stretch reads EKQATIVPPAAPEAEPLALPPAE.

Belongs to the RNA polymerase beta' chain family. In terms of assembly, the RNAP catalytic core consists of 2 alpha, 1 beta, 1 beta' and 1 omega subunit. When a sigma factor is associated with the core the holoenzyme is formed, which can initiate transcription. Requires Mg(2+) as cofactor. The cofactor is Zn(2+).

It carries out the reaction RNA(n) + a ribonucleoside 5'-triphosphate = RNA(n+1) + diphosphate. Functionally, DNA-dependent RNA polymerase catalyzes the transcription of DNA into RNA using the four ribonucleoside triphosphates as substrates. In Rhodopseudomonas palustris (strain BisB5), this protein is DNA-directed RNA polymerase subunit beta'.